A 138-amino-acid chain; its full sequence is ATP synthase epsilon chain (138 aa).

Belongs to the ATPase epsilon chain family. F-type ATPases have 2 components, CF(1) - the catalytic core - and CF(0) - the membrane proton channel. CF(1) has five subunits: alpha(3), beta(3), gamma(1), delta(1), epsilon(1). CF(0) has three main subunits: a, b and c.

It localises to the cell inner membrane. Its function is as follows. Produces ATP from ADP in the presence of a proton gradient across the membrane. The chain is ATP synthase epsilon chain from Blochmanniella floridana.